Here is a 299-residue protein sequence, read N- to C-terminus: Apolipoprotein E (299 aa).

A signal peptide spans 1-18; the sequence is MKVLCTVLVVTLLAGCRA. Positions 74-245 are 8 X 22 AA approximate tandem repeats; it reads VLMEDTMKAV…RLEEVREQME (172 aa). Tandem repeats lie at residues 75 to 95, 96 to 117, 118 to 139, 140 to 161, 162 to 183, 184 to 206, 207 to 225, and 224 to 242. Methionine 137 bears the Methionine sulfoxide mark. Serine 141 carries the phosphoserine modification. Residues 152–162 are LDL and other lipoprotein receptors binding; it reads HLRKLRKRMLR. 156-159 is a binding site for heparin; the sequence is LRKR. The lipid-binding and lipoprotein association stretch occupies residues 205–273; sequence ALTSQPLQER…GWFEPMVEDM (69 aa). 219–226 is a heparin binding site; sequence GKQLRGRL. Residues 261 to 273 are specificity for association with VLDL; the sequence is RLKGWFEPMVEDM.

Belongs to the apolipoprotein A1/A4/E family. In terms of assembly, homotetramer. May interact with ABCA1; functionally associated with ABCA1 in the biogenesis of HDLs. May interact with APP/A4 amyloid-beta peptide; the interaction is extremely stable in vitro but its physiological significance is unclear. May interact with MAPT. May interact with MAP2. In the cerebrospinal fluid, interacts with secreted SORL1. Interacts with PMEL; this allows the loading of PMEL luminal fragment on ILVs to induce fibril nucleation. In terms of processing, APOE exists as multiple glycosylated and sialylated glycoforms within cells and in plasma. The extent of glycosylation and sialylation are tissue and context specific. Post-translationally, glycated in plasma VLDL. Phosphorylated by FAM20C in the extracellular medium.

The protein resides in the secreted. It is found in the extracellular space. The protein localises to the extracellular matrix. It localises to the extracellular vesicle. Its subcellular location is the endosome. The protein resides in the multivesicular body. Its function is as follows. APOE is an apolipoprotein, a protein associating with lipid particles, that mainly functions in lipoprotein-mediated lipid transport between organs via the plasma and interstitial fluids. APOE is a core component of plasma lipoproteins and is involved in their production, conversion and clearance. Apolipoproteins are amphipathic molecules that interact both with lipids of the lipoprotein particle core and the aqueous environment of the plasma. As such, APOE associates with chylomicrons, chylomicron remnants, very low density lipoproteins (VLDL) and intermediate density lipoproteins (IDL) but shows a preferential binding to high-density lipoproteins (HDL). It also binds a wide range of cellular receptors including the LDL receptor/LDLR, the LDL receptor-related proteins LRP1, LRP2 and LRP8 and the very low-density lipoprotein receptor/VLDLR that mediate the cellular uptake of the APOE-containing lipoprotein particles. Finally, APOE also has a heparin-binding activity and binds heparan-sulfate proteoglycans on the surface of cells, a property that supports the capture and the receptor-mediated uptake of APOE-containing lipoproteins by cells. A main function of APOE is to mediate lipoprotein clearance through the uptake of chylomicrons, VLDLs, and HDLs by hepatocytes. APOE is also involved in the biosynthesis by the liver of VLDLs as well as their uptake by peripheral tissues ensuring the delivery of triglycerides and energy storage in muscle, heart and adipose tissues. By participating in the lipoprotein-mediated distribution of lipids among tissues, APOE plays a critical role in plasma and tissues lipid homeostasis. APOE is also involved in two steps of reverse cholesterol transport, the HDLs-mediated transport of cholesterol from peripheral tissues to the liver, and thereby plays an important role in cholesterol homeostasis. First, it is functionally associated with ABCA1 in the biogenesis of HDLs in tissues. Second, it is enriched in circulating HDLs and mediates their uptake by hepatocytes. APOE also plays an important role in lipid transport in the central nervous system, regulating neuron survival and sprouting. The sequence is that of Apolipoprotein E (Apoe) from Tympanoctomys barrerae (Plains viscacha rat).